A 179-amino-acid polypeptide reads, in one-letter code: ATP synthase subunit delta (179 aa).

Belongs to the ATPase delta chain family. As to quaternary structure, F-type ATPases have 2 components, F(1) - the catalytic core - and F(0) - the membrane proton channel. F(1) has five subunits: alpha(3), beta(3), gamma(1), delta(1), epsilon(1). F(0) has three main subunits: a(1), b(2) and c(10-14). The alpha and beta chains form an alternating ring which encloses part of the gamma chain. F(1) is attached to F(0) by a central stalk formed by the gamma and epsilon chains, while a peripheral stalk is formed by the delta and b chains.

The protein resides in the cell membrane. F(1)F(0) ATP synthase produces ATP from ADP in the presence of a proton or sodium gradient. F-type ATPases consist of two structural domains, F(1) containing the extramembraneous catalytic core and F(0) containing the membrane proton channel, linked together by a central stalk and a peripheral stalk. During catalysis, ATP synthesis in the catalytic domain of F(1) is coupled via a rotary mechanism of the central stalk subunits to proton translocation. Its function is as follows. This protein is part of the stalk that links CF(0) to CF(1). It either transmits conformational changes from CF(0) to CF(1) or is implicated in proton conduction. This chain is ATP synthase subunit delta, found in Clostridium botulinum (strain Langeland / NCTC 10281 / Type F).